A 792-amino-acid polypeptide reads, in one-letter code: 5-methyltetrahydropteroyltriglutamate--homocysteine methyltransferase (792 aa).

5-methyltetrahydropteroyltri-L-glutamate is bound by residues 16 to 19 (RELK) and K112. L-homocysteine is bound by residues 432–434 (IGS) and E485. Residues 432 to 434 (IGS) and E485 contribute to the L-methionine site. Residues 516 to 517 (RC) and W562 contribute to the 5-methyltetrahydropteroyltri-L-glutamate site. D600 is a binding site for L-homocysteine. D600 contacts L-methionine. E606 lines the 5-methyltetrahydropteroyltri-L-glutamate pocket. Positions 642, 644, and 666 each coordinate Zn(2+). Catalysis depends on H695, which acts as the Proton donor. C727 serves as a coordination point for Zn(2+).

It belongs to the vitamin-B12 independent methionine synthase family. Requires Zn(2+) as cofactor.

It carries out the reaction 5-methyltetrahydropteroyltri-L-glutamate + L-homocysteine = tetrahydropteroyltri-L-glutamate + L-methionine. The protein operates within amino-acid biosynthesis; L-methionine biosynthesis via de novo pathway; L-methionine from L-homocysteine (MetE route): step 1/1. In terms of biological role, catalyzes the transfer of a methyl group from 5-methyltetrahydrofolate to homocysteine resulting in methionine formation. The sequence is that of 5-methyltetrahydropteroyltriglutamate--homocysteine methyltransferase from Cupriavidus necator (Alcaligenes eutrophus).